Reading from the N-terminus, the 357-residue chain is Peptide chain release factor 1 (357 aa).

Gln-234 is subject to N5-methylglutamine. A disordered region spans residues 283-313 (SKKQEQRSSNRKQQVGSGDRSERIRTYNFPQ).

The protein belongs to the prokaryotic/mitochondrial release factor family. Post-translationally, methylated by PrmC. Methylation increases the termination efficiency of RF1.

The protein localises to the cytoplasm. Functionally, peptide chain release factor 1 directs the termination of translation in response to the peptide chain termination codons UAG and UAA. The protein is Peptide chain release factor 1 (prfA) of Borreliella burgdorferi (strain ATCC 35210 / DSM 4680 / CIP 102532 / B31) (Borrelia burgdorferi).